The sequence spans 158 residues: UPF0329 protein ECU06_0050 (158 aa).

It belongs to the UPF0329 family.

This Encephalitozoon cuniculi (strain GB-M1) (Microsporidian parasite) protein is UPF0329 protein ECU06_0050.